Consider the following 188-residue polypeptide: Ribose 1,5-bisphosphate phosphokinase PhnN (188 aa).

9-16 (GPSGAGKD) contacts ATP.

Belongs to the ribose 1,5-bisphosphokinase family.

The enzyme catalyses alpha-D-ribose 1,5-bisphosphate + ATP = 5-phospho-alpha-D-ribose 1-diphosphate + ADP. The protein operates within metabolic intermediate biosynthesis; 5-phospho-alpha-D-ribose 1-diphosphate biosynthesis; 5-phospho-alpha-D-ribose 1-diphosphate from D-ribose 5-phosphate (route II): step 3/3. Functionally, catalyzes the phosphorylation of ribose 1,5-bisphosphate to 5-phospho-D-ribosyl alpha-1-diphosphate (PRPP). This chain is Ribose 1,5-bisphosphate phosphokinase PhnN, found in Pectobacterium parmentieri (strain WPP163) (Pectobacterium wasabiae (strain WPP163)).